The chain runs to 316 residues: Ribosomal RNA small subunit methyltransferase H (316 aa).

S-adenosyl-L-methionine is bound by residues 35 to 37 (AGH), Asp55, Phe84, Asp105, and Gln112.

The protein belongs to the methyltransferase superfamily. RsmH family.

The protein resides in the cytoplasm. It carries out the reaction cytidine(1402) in 16S rRNA + S-adenosyl-L-methionine = N(4)-methylcytidine(1402) in 16S rRNA + S-adenosyl-L-homocysteine + H(+). Functionally, specifically methylates the N4 position of cytidine in position 1402 (C1402) of 16S rRNA. This chain is Ribosomal RNA small subunit methyltransferase H, found in Streptococcus pneumoniae (strain ATCC 700669 / Spain 23F-1).